The following is an 89-amino-acid chain: MSITPERKQTLVKEYAQKSGDTGSPEVQVAILTERIVNLTEHFKTHVKDNHSRRGLLKMVSQRRQLLDYVKNRDEPRYKSLIERLGIRR.

It belongs to the universal ribosomal protein uS15 family. As to quaternary structure, part of the 30S ribosomal subunit. Forms a bridge to the 50S subunit in the 70S ribosome, contacting the 23S rRNA.

Its function is as follows. One of the primary rRNA binding proteins, it binds directly to 16S rRNA where it helps nucleate assembly of the platform of the 30S subunit by binding and bridging several RNA helices of the 16S rRNA. Forms an intersubunit bridge (bridge B4) with the 23S rRNA of the 50S subunit in the ribosome. This chain is Small ribosomal subunit protein uS15, found in Methylocella silvestris (strain DSM 15510 / CIP 108128 / LMG 27833 / NCIMB 13906 / BL2).